A 296-amino-acid polypeptide reads, in one-letter code: MHKSVLLKEVTDFLSNPCPKIHIDATLGLGGHAKALLEVCKDTFLIGIDKDENAIEIAKEKLKGFNAVFYHGSFKDFDIVLKEEGLLYFDSILFDFGVSSLQLDEEEGFSFQREDFLDMRMDKRQQKTAYIVINTYKEKELADIFYKYGEERLSKKIARSIVEKRKKKPIETTKELVDIVSSCYPYKYSKINPATKVFQALRIEVNSELEDIKIALSKLLDFAKEGSKFAFISFHSLEDRLVKEFIKNNADKLKVCSKKPITPSDEELLYNKRARSAKLRCAKLCYNEKKDEAFDS.

S-adenosyl-L-methionine is bound by residues Gly30–His32, Asp49, Phe77, Asp95, and Gln102.

Belongs to the methyltransferase superfamily. RsmH family.

The protein resides in the cytoplasm. It carries out the reaction cytidine(1402) in 16S rRNA + S-adenosyl-L-methionine = N(4)-methylcytidine(1402) in 16S rRNA + S-adenosyl-L-homocysteine + H(+). In terms of biological role, specifically methylates the N4 position of cytidine in position 1402 (C1402) of 16S rRNA. The chain is Ribosomal RNA small subunit methyltransferase H from Hydrogenobaculum sp. (strain Y04AAS1).